The primary structure comprises 274 residues: Lectin-like protein (274 aa).

Residues 1 to 19 (MKIHKLCFLALLLAHTTSA) form the signal peptide. Residues 28–268 (TSELVFLGDA…RHDIWSWTFQ (241 aa)) are legume-lectin like. The disordered stretch occupies residues 62–81 (SHGQSLWSTPVPFKPSSNSS). The N-linked (GlcNAc...) asparagine glycan is linked to asparagine 129. The residue at position 238 (serine 238) is a Phosphoserine.

The protein belongs to the leguminous lectin family. Expressed in seedlings and leaves of adult plants.

It localises to the secreted. It is found in the extracellular space. The protein resides in the apoplast. The protein localises to the cell membrane. In terms of biological role, plays a positive role in the effector-triggered immunity (ETI) response. Involved in salicylic acid (SA)-mediated processes occurring in ETI response, but is not involved in the autophagy process. Promotes systemic rather than local immunity. Essential for systemic acquired resistance (SAR), but not necessary for immune signaling downstream of SA. May act in parallel with SA. This chain is Lectin-like protein, found in Arabidopsis thaliana (Mouse-ear cress).